Here is a 274-residue protein sequence, read N- to C-terminus: 2,3,4,5-tetrahydropyridine-2,6-dicarboxylate N-succinyltransferase (274 aa).

Positions 106 and 143 each coordinate substrate.

It belongs to the transferase hexapeptide repeat family. As to quaternary structure, homotrimer.

The protein resides in the cytoplasm. The enzyme catalyses (S)-2,3,4,5-tetrahydrodipicolinate + succinyl-CoA + H2O = (S)-2-succinylamino-6-oxoheptanedioate + CoA. It participates in amino-acid biosynthesis; L-lysine biosynthesis via DAP pathway; LL-2,6-diaminopimelate from (S)-tetrahydrodipicolinate (succinylase route): step 1/3. This is 2,3,4,5-tetrahydropyridine-2,6-dicarboxylate N-succinyltransferase from Cupriavidus metallidurans (strain ATCC 43123 / DSM 2839 / NBRC 102507 / CH34) (Ralstonia metallidurans).